Consider the following 166-residue polypeptide: Heme-degrading monooxygenase HmoB (166 aa).

Asn-33 contacts Fe cation. The ABM domain maps to 66–153 (FAVLNNIAVT…SAGIDTTSIF (88 aa)). Position 138 (His-138) interacts with heme.

This sequence belongs to the antibiotic biosynthesis monooxygenase family. As to quaternary structure, homodimer.

It is found in the cytoplasm. It carries out the reaction heme b + 3 reduced [NADPH--hemoprotein reductase] + 3 O2 = biliverdin IXalpha + CO + Fe(2+) + 3 oxidized [NADPH--hemoprotein reductase] + 3 H2O + H(+). Functionally, catalyzes the oxidative degradation of the heme macrocyclic porphyrin ring in the presence of a suitable electron donor such as ascorbate or NADPH--cytochrome P450 reductase, with subsequent release of free iron. In Bacillus subtilis (strain 168), this protein is Heme-degrading monooxygenase HmoB (hmoB).